Consider the following 188-residue polypeptide: Adenine phosphoribosyltransferase (188 aa).

It belongs to the purine/pyrimidine phosphoribosyltransferase family. In terms of assembly, homodimer.

It is found in the cytoplasm. It carries out the reaction AMP + diphosphate = 5-phospho-alpha-D-ribose 1-diphosphate + adenine. It participates in purine metabolism; AMP biosynthesis via salvage pathway; AMP from adenine: step 1/1. In terms of biological role, catalyzes a salvage reaction resulting in the formation of AMP, that is energically less costly than de novo synthesis. In Burkholderia orbicola (strain MC0-3), this protein is Adenine phosphoribosyltransferase.